We begin with the raw amino-acid sequence, 468 residues long: Alpha-N-acetylgalactosaminidase (468 aa).

A signal peptide (tat-type signal) is located at residues 1 to 30 (MENTRRNFLKKVTAAGIGAAGLAVTDQAMA). Residues 62-63 (SR), aspartate 84, 133-136 (WEWH), 154-155 (EV), and asparagine 183 each bind NAD(+). Residue tyrosine 212 coordinates substrate. 243–247 (AEAQW) is a binding site for NAD(+). Substrate contacts are provided by residues arginine 248, 260-263 (YPTH), and tyrosine 342. Residue tyrosine 260 coordinates NAD(+).

Belongs to the Gfo/Idh/MocA family. Glycosyl hydrolase 109 subfamily. NAD(+) is required as a cofactor. Post-translationally, predicted to be exported by the Tat system. The position of the signal peptide cleavage has not been experimentally proven.

The catalysed reaction is Cleavage of non-reducing alpha-(1-&gt;3)-N-acetylgalactosamine residues from human blood group A and AB mucin glycoproteins, Forssman hapten and blood group A lacto series glycolipids.. In terms of biological role, glycosidase that has specific alpha-N-acetylgalactosaminidase activity. This Tannerella forsythia (Bacteroides forsythus) protein is Alpha-N-acetylgalactosaminidase (nagA).